The primary structure comprises 335 residues: Cell division protein ZipA (335 aa).

Residues 1–4 lie on the Periplasmic side of the membrane; that stretch reads MDLN. Residues 5 to 25 traverse the membrane as a helical segment; it reads AILIILGVIALIILVAHGIWS. Residues 26 to 335 are Cytoplasmic-facing; the sequence is NRCEKSQYFE…AERDYLARVS (310 aa).

Belongs to the ZipA family. In terms of assembly, interacts with FtsZ via their C-terminal domains.

The protein localises to the cell inner membrane. In terms of biological role, essential cell division protein that stabilizes the FtsZ protofilaments by cross-linking them and that serves as a cytoplasmic membrane anchor for the Z ring. Also required for the recruitment to the septal ring of downstream cell division proteins. This is Cell division protein ZipA from Histophilus somni (strain 129Pt) (Haemophilus somnus).